A 282-amino-acid polypeptide reads, in one-letter code: U1 small nuclear ribonucleoprotein A (282 aa).

RRM domains follow at residues 10-89 (NTIY…YSKT) and 208-282 (HILF…FAKK).

Belongs to the RRM U1 A/B'' family. As to quaternary structure, U1 snRNP is composed of the 7 core Sm proteins snrpb, snrpd1, snrpd2, snrpd3, snrpe, snrpf and snrpg that assemble in a heptameric protein ring on the Sm site of the small nuclear RNA to form the core snRNP, and at least three U1 snRNP-specific proteins snrnp70/U1-70K, snrpa/U1-A and snrpc/U1-C.

The protein resides in the nucleus. In terms of biological role, component of the spliceosomal U1 snRNP, which is essential for recognition of the pre-mRNA 5' splice-site and the subsequent assembly of the spliceosome. U1 snRNP is the first snRNP to interact with pre-mRNA. This interaction is required for the subsequent binding of U2 snRNP and the U4/U6/U5 tri-snRNP. Snrpa binds stem loop II of U1 snRNA. The protein is U1 small nuclear ribonucleoprotein A (snrpa) of Xenopus laevis (African clawed frog).